Consider the following 154-residue polypeptide: Large ribosomal subunit protein uL15 (154 aa).

The segment at 17–44 is disordered; sequence KRVGRGIGSGTGKTGGRGVKGQRSRSGV. Residues 21 to 35 show a composition bias toward gly residues; it reads RGIGSGTGKTGGRGV.

It belongs to the universal ribosomal protein uL15 family. As to quaternary structure, part of the 50S ribosomal subunit.

Its function is as follows. Binds to the 23S rRNA. This is Large ribosomal subunit protein uL15 from Bartonella henselae (strain ATCC 49882 / DSM 28221 / CCUG 30454 / Houston 1) (Rochalimaea henselae).